The chain runs to 516 residues: Putative protein NRT1/ PTR FAMILY 2.2 (516 aa).

The next 11 membrane-spanning stretches (helical) occupy residues 31–51, 67–87, 90–110, 138–158, 174–194, 201–221, 320–340, 362–382, 394–414, 437–457, and 476–496; these read TLLG…VFLI, IVNG…DSFF, IPVI…LTMI, ILYI…FTLA, FFNW…TAIV, SWKL…IVFV, LLLA…LIIL, VIVI…VYPM, LQKV…SAIV, FIAS…ITLI, and VYWL…AWFY.

Belongs to the major facilitator superfamily. Proton-dependent oligopeptide transporter (POT/PTR) (TC 2.A.17) family. Not detected.

The protein resides in the membrane. In terms of biological role, transporter involved in a passive nitrate efflux. This Arabidopsis thaliana (Mouse-ear cress) protein is Putative protein NRT1/ PTR FAMILY 2.2 (NPF2.2).